Reading from the N-terminus, the 313-residue chain is Olfactory receptor 8B3 (313 aa).

Over 1-25 (MLARNNSLVTEFILAGLTDHPEFQQ) the chain is Extracellular. The N-linked (GlcNAc...) asparagine glycan is linked to asparagine 5. The chain crosses the membrane as a helical span at residues 26–46 (PLFFLFLVVYIVTMVGNLGLI). At 47–54 (ILFGLNSH) the chain is on the cytoplasmic side. The helical transmembrane segment at 55–75 (LHTPMYYFLFNLSFIDLCYSS) threads the bilayer. Residues 76-99 (VFTPKMLMNFVSKKNIISYVGCMT) are Extracellular-facing. Cysteines 97 and 189 form a disulfide. Residues 100-120 (QLFFFLFFVISECYMLTSMAY) traverse the membrane as a helical segment. The Cytoplasmic portion of the chain corresponds to 121–139 (DRYVAICNPLLYKVTMSHQ). The helical transmembrane segment at 140–160 (VCSMLTFAAYIMGLAGATAHT) threads the bilayer. The Extracellular segment spans residues 161-197 (GCMLRLTFCSANIINHYLCDILPLLQLSCTSTYVNEV). The chain crosses the membrane as a helical span at residues 198–217 (VVLIVVGINIMVPSCTILIS). At 218-237 (YVFIVTSILHIKSTQGRSKA) the chain is on the cytoplasmic side. A helical transmembrane segment spans residues 238 to 258 (FSTCSSHVIALSLFFGSAAFM). Residues 259-270 (YIKYSSGSMEQG) are Extracellular-facing. The chain crosses the membrane as a helical span at residues 271-291 (KVSSVFYTNVVPMLNPLIYSL). Residues 292 to 313 (RNKDVKVALRKALIKIQRRNIF) are Cytoplasmic-facing.

This sequence belongs to the G-protein coupled receptor 1 family.

The protein localises to the cell membrane. Functionally, odorant receptor. The protein is Olfactory receptor 8B3 (OR8B3) of Homo sapiens (Human).